The primary structure comprises 334 residues: ATP-dependent kinase YFH7 (334 aa).

Gly-30–Thr-38 provides a ligand contact to ATP.

It belongs to the YFH7 family.

Functionally, ATP-dependent kinase that could be involved in endoplasmic reticulum membrane assembly. The chain is ATP-dependent kinase YFH7 (YFH7) from Eremothecium gossypii (strain ATCC 10895 / CBS 109.51 / FGSC 9923 / NRRL Y-1056) (Yeast).